The primary structure comprises 657 residues: MQTPLIDLQDIRKSYGGGDTPEVHVLRGIDLSIHAGEFVAIVGASGSGKSTLMNILGCLDRPTSGEYRFAGENVAGLDTDELAWLRREAFGFVFQGYHLIPSGSAQENVEMPAIYAGIPAAERHARAAALLERLGLASRTGNRPHQLSGGQQQRVSIARALMNGGHIILADEPTGALDSHSGKEVMALLDELASQGHVVILITHDREVAARAKRIIEISDGLIIRDSAKEDPTVQASTNPGALQAVDLRKRLSEGSEASGAWKGELVDAVQAAWRVMWINRFRTALTLLGIIIGVASVVVMLAVGEGSKRQVMAQMGAFGSNIIYLSGAAPNPRTPPGIVTLDEVAALASLPQITRIMPVNGAEAGVRFGNLDHMSYIGGNDTNFPEIFNWPVVEGSYFTEADERNGAAVAVIGKKVRDKLLKDVSNPIGQYILIENVPFQVVGVLAGKGASSGDQDSDNRIAIPYSAASVRLFGTHNPEYVVIAAADARKVHETEMAIEQLMLQLHNGKKDFELTNNAAMIQAEARTQNTLSLMLGSIAAISLLVGGIGVMNIMLMTVRERTREIGIRMATGARQRDILRQFLTEAVMLSVVGGIAGIGLALLVGGVLILSEVAVAFSLVAIAGAFACALITGVVFGFMPARKAARLDPVTALTSE.

The 240-residue stretch at 6–245 (IDLQDIRKSY…ASTNPGALQA (240 aa)) folds into the ABC transporter domain. An ATP-binding site is contributed by 43 to 50 (GASGSGKS). The next 4 helical transmembrane spans lie at 285–305 (ALTL…LAVG), 539–559 (IAAI…LMTV), 590–610 (LSVV…GVLI), and 620–640 (LVAI…FGFM).

This sequence belongs to the ABC transporter superfamily. Macrolide exporter (TC 3.A.1.122) family. In terms of assembly, part of the tripartite efflux system PvdRT-OpmQ, which is composed of an inner membrane component with both ATPase and permease domains, PvdT, a periplasmic membrane fusion protein, PvdR, and an outer membrane component, OpmQ.

The protein resides in the cell inner membrane. Its function is as follows. Part of the tripartite efflux system PvdRT-OpmQ required for the secretion into the extracellular milieu of the siderophore pyoverdine (PVD), which is involved in iron acquisition. This subunit binds PVD and drives its secretion by hydrolyzing ATP. The system is responsible for export of newly synthesized PVD after the final steps of biosynthesis have taken place in the periplasm. It is also responsible for recycling of PVD after internalization of ferri-PVD into the periplasm by the outer-membrane receptor FpvA and release of iron from PVD, thus making PVD available for new cycles of iron uptake. The protein is Pyoverdine export ATP-binding/permease protein PvdT of Pseudomonas fluorescens (strain Pf0-1).